The chain runs to 571 residues: Proline--tRNA ligase (571 aa).

This sequence belongs to the class-II aminoacyl-tRNA synthetase family. ProS type 1 subfamily. In terms of assembly, homodimer.

The protein resides in the cytoplasm. The enzyme catalyses tRNA(Pro) + L-proline + ATP = L-prolyl-tRNA(Pro) + AMP + diphosphate. In terms of biological role, catalyzes the attachment of proline to tRNA(Pro) in a two-step reaction: proline is first activated by ATP to form Pro-AMP and then transferred to the acceptor end of tRNA(Pro). As ProRS can inadvertently accommodate and process non-cognate amino acids such as alanine and cysteine, to avoid such errors it has two additional distinct editing activities against alanine. One activity is designated as 'pretransfer' editing and involves the tRNA(Pro)-independent hydrolysis of activated Ala-AMP. The other activity is designated 'posttransfer' editing and involves deacylation of mischarged Ala-tRNA(Pro). The misacylated Cys-tRNA(Pro) is not edited by ProRS. The protein is Proline--tRNA ligase of Syntrophotalea carbinolica (strain DSM 2380 / NBRC 103641 / GraBd1) (Pelobacter carbinolicus).